The following is a 1122-amino-acid chain: Cytosolic carboxypeptidase 4 (1122 aa).

The segment at 287–338 (PGSTSSELPLNLTEEDFDDDGDEEMDKDSDVEAVKEDDDLETDLSKLSSKPG) is disordered. Residues 299–313 (TEEDFDDDGDEEMDK) are compositionally biased toward acidic residues. A Peptidase M14 domain is found at 731-1021 (YPYTYSTLMT…MYCLGLLILE (291 aa)). The Zn(2+) site is built by H803, E806, and H900. E985 acts as the Proton donor/acceptor in catalysis. The interval 1099 to 1122 (CALNKDEEEEEKEEGTGWRRRSVT) is disordered.

This sequence belongs to the peptidase M14 family. Interacts with MYLK. Interacts with TCF4. It depends on Zn(2+) as a cofactor. Widely expressed at low level. Expressed in eye, muscle, pituitary, testis and to a lower extent in brain.

It localises to the cytoplasm. The protein resides in the cytosol. It catalyses the reaction (L-glutamyl)(n+1)-gamma-L-glutamyl-L-glutamyl-[protein] + H2O = (L-glutamyl)(n)-gamma-L-glutamyl-L-glutamyl-[protein] + L-glutamate. It carries out the reaction C-terminal L-alpha-aminoacyl-L-glutamyl-L-glutamyl-[tubulin] + H2O = C-terminal L-alpha-aminoacyl-L-glutamyl-[tubulin] + L-glutamate. In terms of biological role, metallocarboxypeptidase that mediates deglutamylation of tubulin and non-tubulin target proteins. Catalyzes the removal of polyglutamate side chains present on the gamma-carboxyl group of glutamate residues within the C-terminal tail of tubulin protein. Specifically cleaves tubulin long-side-chains, while it is not able to remove the branching point glutamate. Also catalyzes the removal of polyglutamate residues from the carboxy-terminus of non-tubulin proteins such as MYLK. This is Cytosolic carboxypeptidase 4 from Mus musculus (Mouse).